An 88-amino-acid chain; its full sequence is Small ribosomal subunit protein uS17 (88 aa).

This sequence belongs to the universal ribosomal protein uS17 family. Part of the 30S ribosomal subunit.

Its function is as follows. One of the primary rRNA binding proteins, it binds specifically to the 5'-end of 16S ribosomal RNA. The sequence is that of Small ribosomal subunit protein uS17 from Lactobacillus acidophilus (strain ATCC 700396 / NCK56 / N2 / NCFM).